We begin with the raw amino-acid sequence, 173 residues long: Bifunctional protein PyrR (173 aa).

The PRPP-binding motif lies at 93–105; that stretch reads VILVDDVLYTGRT.

It belongs to the purine/pyrimidine phosphoribosyltransferase family. PyrR subfamily. In terms of assembly, homodimer and homohexamer; in equilibrium.

The catalysed reaction is UMP + diphosphate = 5-phospho-alpha-D-ribose 1-diphosphate + uracil. Functionally, regulates transcriptional attenuation of the pyrimidine nucleotide (pyr) operon by binding in a uridine-dependent manner to specific sites on pyr mRNA. This disrupts an antiterminator hairpin in the RNA and favors formation of a downstream transcription terminator, leading to a reduced expression of downstream genes. Its function is as follows. Also displays a weak uracil phosphoribosyltransferase activity which is not physiologically significant. This is Bifunctional protein PyrR from Streptococcus thermophilus (strain CNRZ 1066).